The chain runs to 149 residues: UPF0178 protein Mmwyl1_2258 (149 aa).

It belongs to the UPF0178 family.

The polypeptide is UPF0178 protein Mmwyl1_2258 (Marinomonas sp. (strain MWYL1)).